The sequence spans 436 residues: Xylose isomerase (436 aa).

Residues His100 and Asp103 contribute to the active site. Positions 231, 267, 270, 295, 306, 308, and 338 each coordinate Mg(2+).

It belongs to the xylose isomerase family. As to quaternary structure, homotetramer. It depends on Mg(2+) as a cofactor.

It localises to the cytoplasm. It carries out the reaction alpha-D-xylose = alpha-D-xylulofuranose. This chain is Xylose isomerase, found in Rhizobium etli (strain ATCC 51251 / DSM 11541 / JCM 21823 / NBRC 15573 / CFN 42).